Reading from the N-terminus, the 667-residue chain is Glycine--tRNA ligase beta subunit (667 aa).

It belongs to the class-II aminoacyl-tRNA synthetase family. In terms of assembly, tetramer of two alpha and two beta subunits.

Its subcellular location is the cytoplasm. It catalyses the reaction tRNA(Gly) + glycine + ATP = glycyl-tRNA(Gly) + AMP + diphosphate. In Rickettsia canadensis (strain McKiel), this protein is Glycine--tRNA ligase beta subunit.